The sequence spans 206 residues: Probable glutathione peroxidase 3, mitochondrial (206 aa).

A mitochondrion-targeting transit peptide spans 1–12; it reads MPRSSRWVNQRA. Residue C80 is part of the active site.

This sequence belongs to the glutathione peroxidase family. Interacts with ABI1 and ABI2. In terms of tissue distribution, ubiquitous.

It localises to the mitochondrion. The enzyme catalyses 2 glutathione + H2O2 = glutathione disulfide + 2 H2O. Its activity is regulated as follows. The redox states are modulated by H(2)O(2). May constitute a glutathione peroxidase-like protective system against oxidative stresses. Involved positively in abscisic acid (ABA) signaling pathway that regulates numerous ABA responses, such as stomatal closure, seed germination and inhibition of vegetative growth. Oxidizes and represses target proteins (e.g. the phosphatase activity of ABI1 and ABI2) when oxidized by H(2)O(2), probably after ABA signaling. Modulates the calcium channel activity in guard cells in response to ABA or H(2)O(2). Confers tolerance to drought stress, by enhancing the ABA-dependent stomatal closure. The polypeptide is Probable glutathione peroxidase 3, mitochondrial (GPX3) (Arabidopsis thaliana (Mouse-ear cress)).